Reading from the N-terminus, the 239-residue chain is Ribitol-5-phosphate cytidylyltransferase (239 aa).

Residues 7–10 (FAGG) and 80–86 (GETGQMS) each bind CTP.

The protein belongs to the IspD/TarI cytidylyltransferase family. TarI subfamily.

It catalyses the reaction D-ribitol 5-phosphate + CTP + H(+) = CDP-L-ribitol + diphosphate. It participates in cell wall biogenesis; poly(ribitol phosphate) teichoic acid biosynthesis. Functionally, catalyzes the transfer of the cytidylyl group of CTP to D-ribitol 5-phosphate. The polypeptide is Ribitol-5-phosphate cytidylyltransferase (Streptococcus agalactiae serotype III (strain NEM316)).